Reading from the N-terminus, the 254-residue chain is DNA-3-methyladenine glycosylase (254 aa).

Residues 1-10 (MKTPARRSKR) are compositionally biased toward basic residues. The interval 1 to 20 (MKTPARRSKRVNQEESETNV) is disordered.

Belongs to the DNA glycosylase MPG family.

Its subcellular location is the nucleus. It catalyses the reaction Hydrolysis of alkylated DNA, releasing 3-methyladenine, 3-methylguanine, 7-methylguanine and 7-methyladenine.. Hydrolysis of the deoxyribose N-glycosidic bond to excise 3-methyladenine, and 7-methylguanine from the damaged DNA polymer formed by alkylation lesions. This chain is DNA-3-methyladenine glycosylase (MAG), found in Arabidopsis thaliana (Mouse-ear cress).